Reading from the N-terminus, the 466-residue chain is Alpha-1A adrenergic receptor (466 aa).

Residues 1 to 27 lie on the Extracellular side of the membrane; that stretch reads MVLLSENASEGSNCTHPPAQVNISKAI. 3 N-linked (GlcNAc...) asparagine glycosylation sites follow: N7, N13, and N22. Residues 28–51 form a helical membrane-spanning segment; that stretch reads LLGVILGGLIIFGVLGNILVILSV. At 52-64 the chain is on the cytoplasmic side; sequence ACHRHLHSVTHYY. The chain crosses the membrane as a helical span at residues 65 to 88; it reads IVNLAVADLLLTSTVLPFSAIFEI. The Extracellular segment spans residues 89–99; it reads LGYWAFGRVFC. An intrachain disulfide couples C99 to C176. Residues 100-122 form a helical membrane-spanning segment; that stretch reads NIWAAVDVLCCTASIMGLCIISI. Topologically, residues 123–143 are cytoplasmic; it reads DRYIGVSYPLRYPTIVTQRRG. The helical transmembrane segment at 144 to 167 threads the bilayer; sequence VRALLCVWALSLVISIGPLFGWRQ. The Extracellular portion of the chain corresponds to 168 to 181; it reads QAPEDETICQINEE. The helical transmembrane segment at 182–205 threads the bilayer; the sequence is PGYVLFSALGSFYVPLTIILVMYC. Residues 206-273 lie on the Cytoplasmic side of the membrane; the sequence is RVYVVAKRES…FSREKKAAKT (68 aa). Residue S215 is modified to Phosphoserine; by PKA. Residues 274 to 297 traverse the membrane as a helical segment; that stretch reads LGIVVGCFVLCWLPFFLVMPIGSF. The Extracellular segment spans residues 298–305; sequence FPNFKPPE. The helical transmembrane segment at 306–329 threads the bilayer; sequence TVFKIVFWLGYLNSCINPIIYPCS. Residues 330 to 466 lie on the Cytoplasmic side of the membrane; the sequence is SQEFKKAFQN…ISLGENGEEV (137 aa). The short motif at 334–349 is the Nuclear localization signal element; the sequence is KKAFQNVLRIQCLRRR. Residue C345 is the site of S-palmitoyl cysteine attachment.

Belongs to the G-protein coupled receptor 1 family. Adrenergic receptor subfamily. ADRA1A sub-subfamily. Homo- and heterooligomer. Heterooligomerizes with ADRA1B homooligomers in cardiac myocytes. Interacts with CAVIN4.

Its subcellular location is the nucleus membrane. It localises to the cell membrane. It is found in the cytoplasm. The protein localises to the membrane. The protein resides in the caveola. This alpha-adrenergic receptor mediates its action by association with G proteins that activate a phosphatidylinositol-calcium second messenger system. Its effect is mediated by G(q) and G(11) proteins. Nuclear ADRA1A-ADRA1B heterooligomers regulate phenylephrine (PE)-stimulated ERK signaling in cardiac myocytes. In Mus musculus (Mouse), this protein is Alpha-1A adrenergic receptor (Adra1a).